Reading from the N-terminus, the 743-residue chain is Apo-petrobactin exporter (743 aa).

Transmembrane regions (helical) follow at residues 20–40 (WITL…LPQV), 199–219 (ADVK…ILLY), 223–243 (ILAI…SPTL), 258–278 (AISI…LFLI), 303–323 (GGAI…LLLA), 337–357 (VAVF…LLIF), 406–426 (WTII…VPRI), 561–581 (DEAV…LVYL), 584–604 (IVAM…ALGA), 613–633 (MGAP…LVAL), 672–692 (AGLI…QVLV), and 694–714 (FGIV…PLLV).

This sequence belongs to the resistance-nodulation-cell division (RND) (TC 2.A.6) family. MmpL subfamily.

It localises to the cell membrane. Its function is as follows. Exports the siderophore petrobactin. The sequence is that of Apo-petrobactin exporter from Bacillus anthracis.